A 505-amino-acid chain; its full sequence is Lysine--tRNA ligase (505 aa).

Mg(2+)-binding residues include Glu-415 and Glu-422.

Belongs to the class-II aminoacyl-tRNA synthetase family. As to quaternary structure, homodimer. Mg(2+) serves as cofactor.

The protein localises to the cytoplasm. It catalyses the reaction tRNA(Lys) + L-lysine + ATP = L-lysyl-tRNA(Lys) + AMP + diphosphate. This is Lysine--tRNA ligase from Xanthomonas oryzae pv. oryzae (strain MAFF 311018).